The primary structure comprises 445 residues: Tubulin beta-4 chain (445 aa).

Residues 1-4 carry the MREI motif motif; that stretch reads MREI. The GTP site is built by Q11, E69, S138, G142, T143, G144, N204, and N226. Residue E69 coordinates Mg(2+). The tract at residues 425–445 is disordered; it reads YQDATAEEEGEFEEGEEEENA. A compositionally biased stretch (acidic residues) spans 429–445; it reads TAEEEGEFEEGEEEENA. 5-glutamyl polyglutamate is present on E438.

It belongs to the tubulin family. In terms of assembly, dimer of alpha and beta chains. A typical microtubule is a hollow water-filled tube with an outer diameter of 25 nm and an inner diameter of 15 nM. Alpha-beta heterodimers associate head-to-tail to form protofilaments running lengthwise along the microtubule wall with the beta-tubulin subunit facing the microtubule plus end conferring a structural polarity. Microtubules usually have 13 protofilaments but different protofilament numbers can be found in some organisms and specialized cells. The cofactor is Mg(2+). In terms of processing, some glutamate residues at the C-terminus are polyglycylated, resulting in polyglycine chains on the gamma-carboxyl group. Glycylation is mainly limited to tubulin incorporated into axonemes (cilia and flagella) whereas glutamylation is prevalent in neuronal cells, centrioles, axonemes, and the mitotic spindle. Both modifications can coexist on the same protein on adjacent residues, and lowering polyglycylation levels increases polyglutamylation, and reciprocally. The precise function of polyglycylation is still unclear. Some glutamate residues at the C-terminus are polyglutamylated, resulting in polyglutamate chains on the gamma-carboxyl group. Polyglutamylation plays a key role in microtubule severing by spastin (SPAST). SPAST preferentially recognizes and acts on microtubules decorated with short polyglutamate tails: severing activity by SPAST increases as the number of glutamates per tubulin rises from one to eight, but decreases beyond this glutamylation threshold. Preferential expression in germ cells.

It localises to the cytoplasm. The protein localises to the cytoskeleton. Tubulin is the major constituent of microtubules, a cylinder consisting of laterally associated linear protofilaments composed of alpha- and beta-tubulin heterodimers. Microtubules grow by the addition of GTP-tubulin dimers to the microtubule end, where a stabilizing cap forms. Below the cap, tubulin dimers are in GDP-bound state, owing to GTPase activity of alpha-tubulin. The sequence is that of Tubulin beta-4 chain (tubb4) from Xenopus laevis (African clawed frog).